Reading from the N-terminus, the 260-residue chain is Adenosine 5'-phosphosulfate reductase (260 aa).

[4Fe-4S] cluster contacts are provided by Cys-130, Cys-131, Cys-213, and Cys-216. Cys-241 (nucleophile; cysteine thiosulfonate intermediate) is an active-site residue.

The protein belongs to the PAPS reductase family. CysH subfamily. The cofactor is [4Fe-4S] cluster.

It localises to the cytoplasm. It catalyses the reaction [thioredoxin]-disulfide + sulfite + AMP + 2 H(+) = adenosine 5'-phosphosulfate + [thioredoxin]-dithiol. It participates in sulfur metabolism; hydrogen sulfide biosynthesis; sulfite from sulfate. Catalyzes the formation of sulfite from adenosine 5'-phosphosulfate (APS) using thioredoxin as an electron donor. This is Adenosine 5'-phosphosulfate reductase from Agrobacterium fabrum (strain C58 / ATCC 33970) (Agrobacterium tumefaciens (strain C58)).